We begin with the raw amino-acid sequence, 1077 residues long: ATP-dependent helicase/deoxyribonuclease subunit B (1077 aa).

This sequence belongs to the helicase family. AddB/RexB type 2 subfamily. In terms of assembly, heterodimer of AddA and RexB. The cofactor is Mg(2+).

Its function is as follows. The heterodimer acts as both an ATP-dependent DNA helicase and an ATP-dependent, dual-direction single-stranded exonuclease. Recognizes the chi site generating a DNA molecule suitable for the initiation of homologous recombination. This subunit has 5' -&gt; 3' nuclease activity but not helicase activity. In Streptococcus agalactiae serotype Ia (strain ATCC 27591 / A909 / CDC SS700), this protein is ATP-dependent helicase/deoxyribonuclease subunit B.